Reading from the N-terminus, the 958-residue chain is Structure-specific endonuclease subunit SLX4 (958 aa).

6 disordered regions span residues 89-123 (AESP…KGKT), 183-209 (QKKA…GPID), 326-400 (LATA…LSPT), 531-589 (DLTI…EQHQ), 594-613 (QSNT…SFEL), and 655-849 (STAA…SPPA). Basic residues predominate over residues 109-121 (KKPRTAGARKKKG). A compositionally biased stretch (basic and acidic residues) spans 332–341 (RRPEEAERST). Over residues 342–351 (LSRQQDTHIP) the composition is skewed to polar residues. Residues 364 to 373 (AASKSASAKP) show a composition bias toward low complexity. Residues 374–389 (KAAKKAPKPRATKKKQ) are compositionally biased toward basic residues. Residues 600–610 (QPQPAPPPPPS) show a composition bias toward pro residues. Composition is skewed to low complexity over residues 655–666 (STAAQAAMSTSA), 775–787 (TTSP…RAKA), and 821–838 (PDSG…SSPD).

It belongs to the SLX4 family. As to quaternary structure, forms a heterodimer with SLX1. In terms of processing, phosphorylated in response to DNA damage.

It is found in the nucleus. Regulatory subunit of the SLX1-SLX4 structure-specific endonuclease that resolves DNA secondary structures generated during DNA repair and recombination. Has endonuclease activity towards branched DNA substrates, introducing single-strand cuts in duplex DNA close to junctions with ss-DNA. The protein is Structure-specific endonuclease subunit SLX4 of Chaetomium globosum (strain ATCC 6205 / CBS 148.51 / DSM 1962 / NBRC 6347 / NRRL 1970) (Soil fungus).